An 87-amino-acid polypeptide reads, in one-letter code: Small ribosomal subunit protein uS15c (87 aa).

Belongs to the universal ribosomal protein uS15 family. In terms of assembly, part of the 30S ribosomal subunit.

The protein localises to the plastid. Its subcellular location is the chloroplast. The sequence is that of Small ribosomal subunit protein uS15c (rps15) from Oenothera glazioviana (Large-flowered evening primrose).